The chain runs to 197 residues: dTTP/UTP pyrophosphatase (197 aa).

Catalysis depends on Asp-69, which acts as the Proton acceptor.

Belongs to the Maf family. YhdE subfamily. It depends on a divalent metal cation as a cofactor.

It localises to the cytoplasm. The catalysed reaction is dTTP + H2O = dTMP + diphosphate + H(+). The enzyme catalyses UTP + H2O = UMP + diphosphate + H(+). Functionally, nucleoside triphosphate pyrophosphatase that hydrolyzes dTTP and UTP. May have a dual role in cell division arrest and in preventing the incorporation of modified nucleotides into cellular nucleic acids. The sequence is that of dTTP/UTP pyrophosphatase from Lachnoclostridium phytofermentans (strain ATCC 700394 / DSM 18823 / ISDg) (Clostridium phytofermentans).